The sequence spans 200 residues: Imidazoleglycerol-phosphate dehydratase (200 aa).

This sequence belongs to the imidazoleglycerol-phosphate dehydratase family.

It localises to the cytoplasm. It carries out the reaction D-erythro-1-(imidazol-4-yl)glycerol 3-phosphate = 3-(imidazol-4-yl)-2-oxopropyl phosphate + H2O. It functions in the pathway amino-acid biosynthesis; L-histidine biosynthesis; L-histidine from 5-phospho-alpha-D-ribose 1-diphosphate: step 6/9. The protein is Imidazoleglycerol-phosphate dehydratase of Leifsonia xyli subsp. xyli (strain CTCB07).